We begin with the raw amino-acid sequence, 449 residues long: Tubulin alpha-1B chain (449 aa).

Gln-11 serves as a coordination point for GTP. Residue Lys-40 is modified to N6-acetyllysine. The GTP site is built by Glu-71, Ser-140, Gly-144, Thr-145, Thr-179, Asn-206, and Asn-228. A Mg(2+)-binding site is contributed by Glu-71. Residue Glu-254 is part of the active site.

The protein belongs to the tubulin family. Dimer of alpha and beta chains. A typical microtubule is a hollow water-filled tube with an outer diameter of 25 nm and an inner diameter of 15 nM. Alpha-beta heterodimers associate head-to-tail to form protofilaments running lengthwise along the microtubule wall with the beta-tubulin subunit facing the microtubule plus end conferring a structural polarity. Microtubules usually have 13 protofilaments but different protofilament numbers can be found in some organisms and specialized cells. Mg(2+) serves as cofactor. Post-translationally, acetylation of alpha chains at Lys-40 stabilizes microtubules and affects affinity and processivity of microtubule motors. This modification has a role in multiple cellular functions, ranging from cell motility, cell cycle progression or cell differentiation to intracellular trafficking and signaling.

The protein resides in the cytoplasm. It is found in the cytoskeleton. The protein localises to the spindle. It localises to the nucleus. It catalyses the reaction GTP + H2O = GDP + phosphate + H(+). Its function is as follows. Tubulin is the major constituent of microtubules, a cylinder consisting of laterally associated linear protofilaments composed of alpha- and beta-tubulin heterodimers. Microtubules grow by the addition of GTP-tubulin dimers to the microtubule end, where a stabilizing cap forms. Below the cap, tubulin dimers are in GDP-bound state, owing to GTPase activity of alpha-tubulin. In Physarum polycephalum (Slime mold), this protein is Tubulin alpha-1B chain (ALTBN).